We begin with the raw amino-acid sequence, 62 residues long: Photosystem II reaction center protein Z (62 aa).

2 helical membrane passes run 8–28 (AVFA…VVFA) and 41–61 (FSGT…NSLI).

The protein belongs to the PsbZ family. In terms of assembly, PSII is composed of 1 copy each of membrane proteins PsbA, PsbB, PsbC, PsbD, PsbE, PsbF, PsbH, PsbI, PsbJ, PsbK, PsbL, PsbM, PsbT, PsbY, PsbZ, Psb30/Ycf12, at least 3 peripheral proteins of the oxygen-evolving complex and a large number of cofactors. It forms dimeric complexes.

Its subcellular location is the plastid. It is found in the chloroplast thylakoid membrane. Its function is as follows. May control the interaction of photosystem II (PSII) cores with the light-harvesting antenna, regulates electron flow through the 2 photosystem reaction centers. PSII is a light-driven water plastoquinone oxidoreductase, using light energy to abstract electrons from H(2)O, generating a proton gradient subsequently used for ATP formation. This Panax ginseng (Korean ginseng) protein is Photosystem II reaction center protein Z.